The chain runs to 199 residues: NAD(P)H dehydrogenase (quinone) (199 aa).

One can recognise a Flavodoxin-like domain in the interval 4 to 190 (VLVLYYSTYG…DGARYQGRHV (187 aa)). FMN-binding positions include 10–15 (STYGHI) and 78–80 (TRY). Tyr12 is a binding site for NAD(+). Trp98 serves as a coordination point for substrate. Residues 113–119 (SSASQHG) and His134 contribute to the FMN site.

This sequence belongs to the WrbA family. Requires FMN as cofactor.

It carries out the reaction a quinone + NADH + H(+) = a quinol + NAD(+). The enzyme catalyses a quinone + NADPH + H(+) = a quinol + NADP(+). This Methylobacterium sp. (strain 4-46) protein is NAD(P)H dehydrogenase (quinone).